Reading from the N-terminus, the 237-residue chain is MRPSKRAADEMRAVSFERGVMRHAEGSCLVKFGDTHVLVSATLEERLPPWLKGQGRGWVTAEYSMLPRATHDRTRRESTTGKQSGRTQEIQRLIGRSLRSVTDLVALGEKQITLDCDVLQADGGTRTAAITGAWIALYDCLSWMRQRSMVKEIPLKDHVAAVSCGIYNGTPVLDLDYAEDSVAETDANFVMTGTGGIVEIQGTAEKTPFSQDELLGLLSLARSGVEKLVGLQKLAVG.

Residues arginine 86 and 124 to 126 (GTR) each bind phosphate.

Belongs to the RNase PH family. In terms of assembly, homohexameric ring arranged as a trimer of dimers.

The catalysed reaction is tRNA(n+1) + phosphate = tRNA(n) + a ribonucleoside 5'-diphosphate. Its function is as follows. Phosphorolytic 3'-5' exoribonuclease that plays an important role in tRNA 3'-end maturation. Removes nucleotide residues following the 3'-CCA terminus of tRNAs; can also add nucleotides to the ends of RNA molecules by using nucleoside diphosphates as substrates, but this may not be physiologically important. Probably plays a role in initiation of 16S rRNA degradation (leading to ribosome degradation) during starvation. In Xanthobacter autotrophicus (strain ATCC BAA-1158 / Py2), this protein is Ribonuclease PH.